The sequence spans 382 residues: Prostaglandin D2 receptor 2 (382 aa).

Over 1-32 the chain is Extracellular; the sequence is MANVTLKPLCPLLEEMVQLPNHSNSSLRYIDH. N-linked (GlcNAc...) asparagine glycans are attached at residues N3, N21, and N24. Residues 33-55 traverse the membrane as a helical segment; the sequence is VSVLLHGLASLLGLVENGLILFV. The Cytoplasmic segment spans residues 56 to 66; that stretch reads VGCRMRQTVVT. Residues 67–88 traverse the membrane as a helical segment; sequence TWVLHLALSDLLAAASLPFFTY. The Extracellular portion of the chain corresponds to 89-105; it reads FLAVGHSWELGTTFCKL. C103 and C181 are disulfide-bonded. A helical membrane pass occupies residues 106-126; sequence HSSVFFLNMFASGFLLSAISL. Topologically, residues 127-145 are cytoplasmic; that stretch reads DRCLQVVRPVWAQNHRTVA. A helical membrane pass occupies residues 146-167; it reads VAHRVCLMLWALAVLNTIPYFV. The Extracellular segment spans residues 168-209; sequence FRDTIPRLDGRIMCYYNLLLWNPGPDRDTTCDYRQKALAVSK. The helical transmembrane segment at 210–230 threads the bilayer; that stretch reads FLLAFMVPLAIIASSHVAVSL. Residues 231–246 lie on the Cytoplasmic side of the membrane; that stretch reads RLHHRGRQRTGRFVRL. The helical transmembrane segment at 247–268 threads the bilayer; sequence VAAIVVAFVLCWGPYHIFSLLE. Over 269–287 the chain is Extracellular; it reads ARAHSVTTLRQLASRGLPF. The helical transmembrane segment at 288-307 threads the bilayer; the sequence is VTSLAFFNSVVNPLLYVFTC. Over 308 to 357 the chain is Cytoplasmic; the sequence is PDMLYKLRRSLRAVLESVLVEDSDQSGGLRNRRRRASSTATPASTLLLAD. The Involved in the recycling of CRTH2 motif lies at 329–332; it reads DSDQ. 2 positions are modified to phosphoserine: S330 and S344.

The protein belongs to the G-protein coupled receptor 1 family. In terms of processing, phosphorylated.

It localises to the cell membrane. Functionally, receptor for prostaglandin D2 (PGD2). Coupled to the G(i)-protein. Receptor activation may result in pertussis toxin-sensitive decreases in cAMP levels and Ca(2+) mobilization. PI3K signaling is also implicated in mediating PTGDR2 effects. PGD2 induced receptor internalization. CRTH2 internalization can be regulated by diverse kinases such as, PKC, PKA, GRK2, GPRK5/GRK5 and GRK6. Receptor activation is responsible, at least in part, in immune regulation and allergic/inflammation responses. The sequence is that of Prostaglandin D2 receptor 2 (Ptgdr2) from Mus musculus (Mouse).